Here is a 396-residue protein sequence, read N- to C-terminus: S-adenosylmethionine synthase (396 aa).

Residue histidine 14 coordinates ATP. Mg(2+) is bound at residue aspartate 16. Position 42 (glutamate 42) interacts with K(+). 2 residues coordinate L-methionine: glutamate 55 and glutamine 98. The flexible loop stretch occupies residues 98–108 (QSPDIALGVNK). Residues 174-176 (DGK), 241-242 (RF), aspartate 250, 256-257 (RK), alanine 273, and lysine 277 contribute to the ATP site. Residue aspartate 250 coordinates L-methionine. Position 281 (lysine 281) interacts with L-methionine.

It belongs to the AdoMet synthase family. In terms of assembly, homotetramer; dimer of dimers. Mg(2+) is required as a cofactor. K(+) serves as cofactor.

It localises to the cytoplasm. The catalysed reaction is L-methionine + ATP + H2O = S-adenosyl-L-methionine + phosphate + diphosphate. It functions in the pathway amino-acid biosynthesis; S-adenosyl-L-methionine biosynthesis; S-adenosyl-L-methionine from L-methionine: step 1/1. Catalyzes the formation of S-adenosylmethionine (AdoMet) from methionine and ATP. The overall synthetic reaction is composed of two sequential steps, AdoMet formation and the subsequent tripolyphosphate hydrolysis which occurs prior to release of AdoMet from the enzyme. The protein is S-adenosylmethionine synthase of Pseudothermotoga lettingae (strain ATCC BAA-301 / DSM 14385 / NBRC 107922 / TMO) (Thermotoga lettingae).